Reading from the N-terminus, the 1314-residue chain is Enfumafungin synthase efuA (1314 aa).

The terpenne cyclase stretch occupies residues 1-680 (MPSYHNTDKT…RYIDKASRQG (680 aa)). PFTB repeat units follow at residues 19 to 62 (LQQA…ELSL) and 66 to 107 (GPEI…RILG). The next 3 membrane-spanning stretches (helical) occupy residues 133-153 (FFTR…IPQM), 155-175 (AELI…SSWA), and 230-250 (YQWI…FGGL). Residues 260-300 (LKRCTAWLLEHQEESGDWAGFFPPIHGSIWALLLDGFSFQS) form a PFTB 3 repeat. Asp-395 acts as the Proton donor in catalysis. PFTB repeat units follow at residues 417–458 (VMNG…DSLV) and 546–597 (CMRT…LRFR). The tract at residues 681-1314 (IETLRIPSSS…ADSVLDIEEK (634 aa)) is glycosyltransferase. A helical membrane pass occupies residues 1200 to 1220 (AIVQLLYGFTTTILALFGWLK). The tract at residues 1289–1314 (DSGASESSRSSLDGGHADSVLDIEEK) is disordered. Residues 1292–1302 (ASESSRSSLDG) show a composition bias toward low complexity.

It in the N-terminal section; belongs to the terpene cyclase/mutase family. This sequence in the C-terminal section; belongs to the glycosyltransferase 28 family.

It is found in the membrane. It participates in secondary metabolite biosynthesis; terpenoid biosynthesis. In terms of biological role, terpene cyclase-glycosyl transferase fusion protein; part of the gene cluster that mediates the biosynthesis of enfumafungin, a glycosylated fernene-type triterpenoid with potent antifungal activity, mediated by its interaction with beta-1,3-glucan synthase and the fungal cell wall. The pathway begins with the terpene cyclase-glycosyl transferase fusion protein that most likely uses 2,3-oxidosqualene as substrate and catalyzes glycosylation immediately after cyclization. The fernene glycoside then could be processed by the desaturase efuI which catalyzes isomerization of a double bond established by efuA to form the core structure. The latter would then undergo a series of hydroxylations in unknown order at C-2, C-19, C-23 and C-25, which would be catalyzed by two of the three cytochrome P450 monooxygenases efuB, efuG or efuH. The hydroxy-group at C-25 becomes oxidized by the dehydrogenase efuE to enable a spontaneous, non-enzymatic hemiacetal formation with C-23. After hydroxylation at C-2, acetylation by the acetyltransferase efuC takes place. The final steps in enfumafungin biosynthesis require expansion of the 5-membered ring by lactonization via a Baeyer-Villiger reaction mediated by one of the BGC's cytochrome P450 monooxygenases (efuB, efuG or efuH) followed by ring cleavage. This type of reaction would establish a double bond between C-20 and C-21 which could be reduced by the reductase efuL to form the final product. This is Enfumafungin synthase efuA from Hormonema carpetanum.